A 162-amino-acid chain; its full sequence is Putative 4-hydroxy-4-methyl-2-oxoglutarate aldolase (162 aa).

Substrate is bound by residues 75-78 and Arg97; that span reads GDML. Asp98 is a binding site for a divalent metal cation.

This sequence belongs to the class II aldolase/RraA-like family. In terms of assembly, homotrimer. A divalent metal cation serves as cofactor.

The enzyme catalyses 4-hydroxy-4-methyl-2-oxoglutarate = 2 pyruvate. It catalyses the reaction oxaloacetate + H(+) = pyruvate + CO2. Its function is as follows. Catalyzes the aldol cleavage of 4-hydroxy-4-methyl-2-oxoglutarate (HMG) into 2 molecules of pyruvate. Also contains a secondary oxaloacetate (OAA) decarboxylase activity due to the common pyruvate enolate transition state formed following C-C bond cleavage in the retro-aldol and decarboxylation reactions. In Pseudomonas syringae pv. tomato (strain ATCC BAA-871 / DC3000), this protein is Putative 4-hydroxy-4-methyl-2-oxoglutarate aldolase.